The sequence spans 143 residues: Agaricus bisporus lectin (143 aa).

The beta-D-Gal-(1-&gt;3)-alpha-D-GalNAc site is built by Ala29, Ser48, Gly49, and Asn73. Residues Thr82, Arg103, and Tyr114 each coordinate N-acetyl-beta-D-glucosamine.

Belongs to the fungal fruit body lectin family. Homotetramer.

In terms of biological role, lectin that recognizes O-linked galactose-beta-1,3-N-acetylgalactosamine, a disaccharide (Thomsen-Friedenreich antigen or T-disaccharide), present on cell surface glycoproteins. Can also bind galactose-beta-1,3-N-acetylglucosamine. Does not bind monosaccharides. Can be internalized by clathrin-coated vesicles after binding to surface glycoproteins. After internalization it inhibits nuclear import of nuclear localization signal dependent proteins. Inhibits proliferation of malignant cells without cytotoxicity for normal cells. The chain is Agaricus bisporus lectin from Agaricus bisporus (White button mushroom).